Reading from the N-terminus, the 493-residue chain is Cysteine sulfinic acid decarboxylase (493 aa).

At K305 the chain carries N6-(pyridoxal phosphate)lysine.

Belongs to the group II decarboxylase family. Homodimer. Pyridoxal 5'-phosphate serves as cofactor. Expressed in kidney and liver not detected in lymphoid tissues and lung. Expressed in kidney, liver and brain. 7 and 4 times higher expression in kidney and liver than in brain, respectively. Low level of detection in skeletal muscle. Expressed in brain, olfactory bulb, liver, skeletal muscle and kidney with the highest expression in liver and lowest in skeletal muscle (at protein level).

It carries out the reaction L-aspartate + H(+) = beta-alanine + CO2. The enzyme catalyses 3-sulfino-L-alanine + H(+) = hypotaurine + CO2. The catalysed reaction is L-cysteate + H(+) = taurine + CO2. It participates in organosulfur biosynthesis; taurine biosynthesis; hypotaurine from L-cysteine: step 2/2. Its activity is regulated as follows. Activated by Mn(2+). Inhibited by bis-carboxymethyl-trithiocarbonate, ethylxanthogenacetic acid and 2,5-disulfoaniline. Not affected by Li(+) within 0.05-40 mM concentration range. Its function is as follows. Catalyzes the decarboxylation of L-aspartate, 3-sulfino-L-alanine (cysteine sulfinic acid), and L-cysteate to beta-alanine, hypotaurine and taurine, respectively. The preferred substrate is 3-sulfino-L-alanine. Does not exhibit any decarboxylation activity toward glutamate. The sequence is that of Cysteine sulfinic acid decarboxylase from Mus musculus (Mouse).